A 303-amino-acid polypeptide reads, in one-letter code: Movement protein (303 aa).

Belongs to the tobamovirus movement protein family.

The protein localises to the host cytoplasm. Its subcellular location is the host cytoskeleton. It localises to the host cell junction. The protein resides in the host plasmodesma. In terms of biological role, transports viral genome to neighboring plant cells directly through plasmosdesmata, without any budding. The movement protein allows efficient cell to cell propagation, by bypassing the host cell wall barrier. Forms a ribonucleoprotein complex with viral RNA. Binds microtubules and modulates microtubule stability. Can bind double-stranded DNA. This Cymbidium (ORSV) protein is Movement protein (MP).